The chain runs to 497 residues: RNA-splicing ligase RtcB homolog (497 aa).

Residues D111, C114, H219, H251, and H345 each contribute to the Mn(2+) site. 218–222 (NHYAE) is a binding site for GMP. Residues 345–346 (HN), 394–397 (GGTM), S401, 420–423 (HGAG), and K496 contribute to the GMP site. The active-site GMP-histidine intermediate is the H420.

The protein belongs to the RtcB family. As to quaternary structure, catalytic component of the tRNA-splicing ligase complex. The cofactor is Mn(2+).

It carries out the reaction a 3'-end 3'-phospho-ribonucleotide-RNA + a 5'-end dephospho-ribonucleoside-RNA + GTP = a ribonucleotidyl-ribonucleotide-RNA + GMP + diphosphate. The catalysed reaction is a 3'-end 2',3'-cyclophospho-ribonucleotide-RNA + a 5'-end dephospho-ribonucleoside-RNA + GTP + H2O = a ribonucleotidyl-ribonucleotide-RNA + GMP + diphosphate + H(+). In terms of biological role, catalytic subunit of the tRNA-splicing ligase complex that acts by directly joining spliced tRNA halves to mature-sized tRNAs by incorporating the precursor-derived splice junction phosphate into the mature tRNA as a canonical 3',5'-phosphodiester. May act as an RNA ligase with broad substrate specificity, and may function toward other RNAs. This is RNA-splicing ligase RtcB homolog from Monosiga brevicollis (Choanoflagellate).